The chain runs to 431 residues: MSLMTKLGFRALVASCLITAGSAANAQVNVLITGVGSTQFPIATANFANEANLPQQVTSIVRADLARSGKFTNIDAGSTPVPESASVDLGAWKAKGANAFVAGSVNREANGQYKVNFILYDTVKQQSLGGLSLTATDTTLRTAGHKIADYIYQKLLGVRGVFATRLSYVIKTGNRYQLQISDSDGQNARIALSSTEPIISPSWSPSGTKVAYVSFERKKPIVYIHDLPTGRRYIVSDQKGNNSAPAWSPDSNTLAVALSLTGNTQIYTVNSTGGGLRRLTQSSSIDTEPFYSPDGHWIYFTSDRGGAPQIYRMPAQGESAGAAQRVTFTGSYNTSPRISPDGKLLAYISRTGGGFKLYVQDLQSGAANAITNTNRDESPSFAANGQYLLYATQSGGRNVLAAVPSDGSAPPQILSVQGGSVREPSWGPFMQ.

A signal peptide spans 1–26; it reads MSLMTKLGFRALVASCLITAGSAANA. Residues 411–431 are disordered; the sequence is PQILSVQGGSVREPSWGPFMQ.

The protein belongs to the TolB family. The Tol-Pal system is composed of five core proteins: the inner membrane proteins TolA, TolQ and TolR, the periplasmic protein TolB and the outer membrane protein Pal. They form a network linking the inner and outer membranes and the peptidoglycan layer.

Its subcellular location is the periplasm. Part of the Tol-Pal system, which plays a role in outer membrane invagination during cell division and is important for maintaining outer membrane integrity. The polypeptide is Tol-Pal system protein TolB (Burkholderia lata (strain ATCC 17760 / DSM 23089 / LMG 22485 / NCIMB 9086 / R18194 / 383)).